The following is a 194-amino-acid chain: MPTSPGLTEEQRSDLMRRLATSAYKRGNFTLASGRQSEHYVNCKPVSLSGTGLLLISTAMLSHVEDQSVAVAGLTLGADPLVSGVAVAGSLAHRDLDALIVRKAAKGHGTGAWLEGPLPQPGALITVLEDVVTTGGSSLKAVNQLREAGYVVNRVITIVDREEGGAAAMDAAELELISLFRLSEISAFAAELNQ.

Residues Arg102, Lys103, Lys106, His108, and 129-137 (EDVVTTGGS) each bind 5-phospho-alpha-D-ribose 1-diphosphate. Residues Thr133 and Arg161 each contribute to the orotate site.

It belongs to the purine/pyrimidine phosphoribosyltransferase family. PyrE subfamily. In terms of assembly, homodimer. Mg(2+) is required as a cofactor.

The enzyme catalyses orotidine 5'-phosphate + diphosphate = orotate + 5-phospho-alpha-D-ribose 1-diphosphate. It functions in the pathway pyrimidine metabolism; UMP biosynthesis via de novo pathway; UMP from orotate: step 1/2. Catalyzes the transfer of a ribosyl phosphate group from 5-phosphoribose 1-diphosphate to orotate, leading to the formation of orotidine monophosphate (OMP). This Synechococcus sp. (strain CC9902) protein is Orotate phosphoribosyltransferase.